The chain runs to 403 residues: 4-hydroxy-3-methylbut-2-en-1-yl diphosphate synthase (flavodoxin) (403 aa).

Positions 1–16 (MNTENPIEKPFRKTGD) are enriched in basic and acidic residues. The segment at 1 to 31 (MNTENPIEKPFRKTGDPVDLTSESPLHPRRK) is disordered. [4Fe-4S] cluster contacts are provided by Cys291, Cys294, Cys326, and Glu333.

Belongs to the IspG family. It depends on [4Fe-4S] cluster as a cofactor.

It catalyses the reaction (2E)-4-hydroxy-3-methylbut-2-enyl diphosphate + oxidized [flavodoxin] + H2O + 2 H(+) = 2-C-methyl-D-erythritol 2,4-cyclic diphosphate + reduced [flavodoxin]. It participates in isoprenoid biosynthesis; isopentenyl diphosphate biosynthesis via DXP pathway; isopentenyl diphosphate from 1-deoxy-D-xylulose 5-phosphate: step 5/6. Functionally, converts 2C-methyl-D-erythritol 2,4-cyclodiphosphate (ME-2,4cPP) into 1-hydroxy-2-methyl-2-(E)-butenyl 4-diphosphate. The chain is 4-hydroxy-3-methylbut-2-en-1-yl diphosphate synthase (flavodoxin) from Bifidobacterium longum (strain NCC 2705).